A 248-amino-acid polypeptide reads, in one-letter code: MAGHSKWSQIKRTKAVVDSKRGALFTRLGREIMVAARAGSDPAGNFQLRTAINKARAAAMPASNIDRAIAKGSGQGGEGAQLEDVRYEGYGPGGMAVMVEALTDNRNRTAADLRLAFSKNGGNLGENGCVAYLFEHRSEVSIKTEAGSEERLLESLLDLDADGYELNDETTATIFGPFAGLEALQDGLRQQGWDVKEWGHQWATTTNVSISDPATAQSCLNLLDALESLDDVRSVSANLELDTKLEIN.

The protein belongs to the TACO1 family.

It localises to the cytoplasm. The sequence is that of Probable transcriptional regulatory protein Syncc9902_0542 from Synechococcus sp. (strain CC9902).